Consider the following 151-residue polypeptide: MGRMHAPGKGISQSALPYRRSVPTWLKLGPDDVKEQIYKLAKKGLTPSQIGVILRDSHGVAQTRHVAGNKILRILKAKGLAPTIPEDLYFLIKKAVAIRKHLERNRKDKDSKFRLILVESRIHRLARYYKTRKVLPPVWKYESATASALVA.

It belongs to the universal ribosomal protein uS15 family.

The chain is Small ribosomal subunit protein uS15 (RPS13) from Lumbricus rubellus (Humus earthworm).